The primary structure comprises 202 residues: ATP-dependent Clp protease proteolytic subunit (202 aa).

S98 acts as the Nucleophile in catalysis. H123 is an active-site residue.

It belongs to the peptidase S14 family. As to quaternary structure, fourteen ClpP subunits assemble into 2 heptameric rings which stack back to back to give a disk-like structure with a central cavity, resembling the structure of eukaryotic proteasomes.

It localises to the cytoplasm. The enzyme catalyses Hydrolysis of proteins to small peptides in the presence of ATP and magnesium. alpha-casein is the usual test substrate. In the absence of ATP, only oligopeptides shorter than five residues are hydrolyzed (such as succinyl-Leu-Tyr-|-NHMec, and Leu-Tyr-Leu-|-Tyr-Trp, in which cleavage of the -Tyr-|-Leu- and -Tyr-|-Trp bonds also occurs).. Its function is as follows. Cleaves peptides in various proteins in a process that requires ATP hydrolysis. Has a chymotrypsin-like activity. Plays a major role in the degradation of misfolded proteins. The protein is ATP-dependent Clp protease proteolytic subunit of Desulfovibrio desulfuricans (strain ATCC 27774 / DSM 6949 / MB).